Reading from the N-terminus, the 1005-residue chain is DNA polymerase (1005 aa).

It belongs to the DNA polymerase type-B family. Interacts with OPG148. Component of the Uracil-DNA glycosylase(UDG)-OPG148-polymerase complex; OPG148 and OPG116/UDG form a heterodimeric processivity factor that associates with OPG071 to form the processive polymerase holoenzyme.

It carries out the reaction DNA(n) + a 2'-deoxyribonucleoside 5'-triphosphate = DNA(n+1) + diphosphate. Its function is as follows. Catalyzes DNA synthesis. Acquires processivity by associating with a heterodimeric processivity factor comprised of the viral OPG148 and OPG116 proteins, thereby forming the DNA polymerase holoenzyme. Displays 3'- to 5' exonuclease activity. Might participate in viral DNA recombination. Does not perform OPG116/D4synthesis across an abasic site. The chain is DNA polymerase (OPG071) from Variola virus.